Reading from the N-terminus, the 350-residue chain is tRNA pseudouridine synthase D (350 aa).

Substrate is bound at residue Phe27. The Nucleophile role is filled by Asp80. Asn129 is a substrate binding site. The 149-residue stretch at 155-303 folds into the TRUD domain; it reads GVPNYFGVQR…VDTTRRAINL (149 aa). Phe329 is a substrate binding site.

The protein belongs to the pseudouridine synthase TruD family.

The enzyme catalyses uridine(13) in tRNA = pseudouridine(13) in tRNA. Responsible for synthesis of pseudouridine from uracil-13 in transfer RNAs. This Proteus mirabilis (strain HI4320) protein is tRNA pseudouridine synthase D.